The chain runs to 1242 residues: Structural polyprotein (1242 aa).

The segment at methionine 1–proline 36 is necessary for nucleocapsid assembly and virus assembly. The disordered stretch occupies residues methionine 1 to methionine 104. The host transcription inhibition stretch occupies residues leucine 37 to lysine 70. Residues leucine 44–leucine 51 carry the Supraphysiological nuclear export signal motif. Positions alanine 66–methionine 104 are enriched in basic residues. The short motif at lysine 67–lysine 70 is the Nuclear localization signal element. A binding to the viral RNA region spans residues lysine 83 to threonine 113. Residues proline 98–lysine 112 form a ribosome-binding region. Phosphoserine is present on serine 110. A Peptidase S3 domain is found at lysine 112 to tryptophan 261. At threonine 113 the chain carries Phosphothreonine. Residues histidine 138, aspartate 160, and serine 212 each act as charge relay system in the active site. Residues serine 262–isoleucine 273 are functions as an uncleaved signal peptide for the precursor of protein E3/E2. Asparagine 272 carries N-linked (GlcNAc...) asparagine; by host glycosylation. The Extracellular segment spans residues aspartate 325 to threonine 688. The helical transmembrane segment at isoleucine 689–leucine 709 threads the bilayer. Residues leucine 710 to alanine 744 are Cytoplasmic-facing. S-palmitoyl cysteine; by host attachment occurs at residues cysteine 717, cysteine 737, and cysteine 738. Positions cysteine 717–cysteine 737 are transient transmembrane before p62-6K protein processing. Residues aspartate 745–glutamine 759 lie on the Extracellular side of the membrane. A run of 2 helical transmembrane segments spans residues asparagine 760 to leucine 780 and arginine 781 to alanine 801. Topologically, residues tyrosine 802–serine 1218 are extracellular. Cystine bridges form between cysteine 850-cysteine 915, cysteine 863-cysteine 895, cysteine 864-cysteine 897, cysteine 869-cysteine 879, cysteine 1061-cysteine 1073, cysteine 1103-cysteine 1178, cysteine 1108-cysteine 1182, and cysteine 1130-cysteine 1172. Residues valine 885–threonine 902 are E1 fusion peptide loop. The chain crosses the membrane as a helical span at residues threonine 1219 to threonine 1239. Over histidine 1240–histidine 1242 the chain is Cytoplasmic.

In terms of assembly, part of a tetrameric complex composed of host CRM1, host importin alpha/beta dimer and the viral capsid; this complex blocks the receptor-mediated transport through the nuclear pore. Interacts with host phosphatase PPP1CA; this interaction dephosphorylates the capsid protein, which increases its ability to bind to the viral genome. Interacts with host karyopherin KPNA4; this interaction allows the nuclear import of the viral capsid protein. Interacts with spike glycoprotein E2. Interacts with host IRAK1; the interaction leads to inhibition of IRAK1-dependent signaling. The precursor of protein E3/E2 and E1 form a heterodimer shortly after synthesis. As to quaternary structure, the precursor of protein E3/E2 and E1 form a heterodimer shortly after synthesis. Processing of the precursor of protein E3/E2 into E2 and E3 results in a heterodimer of the spike glycoproteins E2 and E1. Spike at virion surface are constituted of three E2-E1 heterodimers. After target cell attachment and endocytosis, E1 change conformation to form homotrimers. Interacts with 6K protein. In terms of assembly, processing of the precursor of protein E3/E2 into E2 and E3 results in a heterodimer of the spike glycoproteins E2 and E1. Spike at virion surface are constituted of three E2-E1 heterodimers. Interacts with 6K protein. Interacts with spike glycoprotein E1. Interacts with spike glycoprotein E2. Post-translationally, structural polyprotein: Specific enzymatic cleavages in vivo yield mature proteins. Capsid protein is auto-cleaved during polyprotein translation, unmasking a signal peptide at the N-terminus of the precursor of E3/E2. The remaining polyprotein is then targeted to the host endoplasmic reticulum, where host signal peptidase cleaves it into pE2, 6K and E1 proteins. pE2 is further processed to mature E3 and E2 by host furin in trans-Golgi vesicle. Phosphorylated on serine and threonine residues. In terms of processing, palmitoylated via thioester bonds. These palmitoylations may induce disruption of the C-terminus transmembrane. This would result in the reorientation of E2 C-terminus from lumenal to cytoplasmic side. Post-translationally, N-glycosylated. Palmitoylated via thioester bonds.

It is found in the virion. It localises to the host cytoplasm. The protein localises to the host cell membrane. Its subcellular location is the host nucleus. The protein resides in the virion membrane. It catalyses the reaction Autocatalytic release of the core protein from the N-terminus of the togavirus structural polyprotein by hydrolysis of a -Trp-|-Ser- bond.. Forms an icosahedral capsid with a T=4 symmetry composed of 240 copies of the capsid protein surrounded by a lipid membrane through which penetrate 80 spikes composed of trimers of E1-E2 heterodimers. The capsid protein binds to the viral RNA genome at a site adjacent to a ribosome binding site for viral genome translation following genome release. Possesses a protease activity that results in its autocatalytic cleavage from the nascent structural protein. Following its self-cleavage, the capsid protein transiently associates with ribosomes, and within several minutes the protein binds to viral RNA and rapidly assembles into icosahedric core particles. The resulting nucleocapsid eventually associates with the cytoplasmic domain of the spike glycoprotein E2 at the cell membrane, leading to budding and formation of mature virions. In case of infection, new virions attach to target cells and after clathrin-mediated endocytosis their membrane fuses with the host endosomal membrane. This leads to the release of the nucleocapsid into the cytoplasm, followed by an uncoating event necessary for the genomic RNA to become accessible. The uncoating might be triggered by the interaction of capsid proteins with ribosomes. Binding of ribosomes would release the genomic RNA since the same region is genomic RNA-binding and ribosome-binding. Specifically inhibits interleukin-1 receptor-associated kinase 1/IRAK1-dependent signaling during viral entry, representing a means by which the alphaviruses may evade innate immune detection and activation prior to viral gene expression. Inhibits host transcription. Forms a tetrameric complex with XPO1/CRM1 and the nuclear import receptor importin. This complex blocks the central channel of host nuclear pores thereby inhibiting the receptor-mediated nuclear transport and thus the host mRNA and rRNA transcription. The inhibition of transcription is linked to a cytopathic effect on the host cell. Its function is as follows. Provides the signal sequence for the translocation of the precursor of protein E3/E2 to the host endoplasmic reticulum. Furin-cleaved E3 remains associated with spike glycoprotein E1 and mediates pH protection of the latter during the transport via the secretory pathway. After virion release from the host cell, the assembly protein E3 is gradually released in the extracellular space. In terms of biological role, plays a role in viral attachment to target host cell, by binding to the cell receptor. Synthesized as a p62 precursor which is processed by furin at the cell membrane just before virion budding, giving rise to E2-E1 heterodimer. The p62-E1 heterodimer is stable, whereas E2-E1 is unstable and dissociate at low pH. p62 is processed at the last step, presumably to avoid E1 fusion activation before its final export to cell surface. E2 C-terminus contains a transitory transmembrane that would be disrupted by palmitoylation, resulting in reorientation of the C-terminal tail from lumenal to cytoplasmic side. This step is critical since E2 C-terminus is involved in budding by interacting with capsid proteins. This release of E2 C-terminus in cytoplasm occurs lately in protein export, and precludes premature assembly of particles at the endoplasmic reticulum membrane. Functionally, constitutive membrane protein involved in virus glycoprotein processing, cell permeabilization, and the budding of viral particles. Disrupts the calcium homeostasis of the cell, probably at the endoplasmic reticulum level. This leads to cytoplasmic calcium elevation. Because of its lipophilic properties, the 6K protein is postulated to influence the selection of lipids that interact with the transmembrane domains of the glycoproteins, which, in turn, affects the deformability of the bilayer required for the extreme curvature that occurs as budding proceeds. Present in low amount in virions, about 3% compared to viral glycoproteins. Class II viral fusion protein. Fusion activity is inactive as long as E1 is bound to E2 in mature virion. After virus attachment to target cell and endocytosis, acidification of the endosome would induce dissociation of E1/E2 heterodimer and concomitant trimerization of the E1 subunits. This E1 trimer is fusion active, and promotes release of viral nucleocapsid in cytoplasm after endosome and viral membrane fusion. Efficient fusion requires the presence of cholesterol and sphingolipid in the target membrane. Fusion is optimal at levels of about 1 molecule of cholesterol per 2 molecules of phospholipids, and is specific for sterols containing a 3-beta-hydroxyl group. This is Structural polyprotein from Aedes (Human).